A 700-amino-acid polypeptide reads, in one-letter code: MISPNLTANVEIDGKQYNTFTEPPKALAGERAKVKFPIKDMTEFLHGGEENVTMIERLMTELERDPVLNVSGDYDMPKEQLRETAVARIAALSGHWKKDTEKEALLRSQLHGIVDMGTRIRLGVHTGLFMGAIRGSGTKEQYDYWVRKGAADVKGFYGCFAMTELGHGSNVAGLETTATYIQDTDEFIINTPNTGATKWWIGGAAHSATHTACFARLLVDGKDYGVKIFVVQLRDVSSHSLMPGIALGDIGKKMGRDAIDNGWIQFTNVRIPRQNMLMKYAKVSSTGKVSQPPLAQLTYGALIGGRVTMIADSFFVSQRFITIALRYACVRRQFGTTPGQPETKIIDYPYHQRRLLPLLAFTYAMKMAADQSQIQYDQTTDLLQTIDPKDKGALGKAIVDLKELFASSAGLKAFTTWTCANIIDQCRQACGGHGYSGYNGFGQAYADWVVQCTWEGDNNVLCLSMGRGLIQSCLGHRKGKPLGSSVGYLANKGLEQATLSGRDLKDPKVLIEAWEKVANGAIQRATDKFVELTKGGLSPDQAFEELSQQRFQCAKIHTRKHLVTAFYERINASAKADVKPYLINLANLFTLWSIEEDSGLFLREGFLQPKDIDQVTELVNHYCKEVRDQVAGYTDAFGLSDWFINAPIGNYDGDVYKHYFAKVNQQNPAQNPRPPYYESTLRPFLFREDEDDDICELDEE.

Belongs to the acyl-CoA oxidase family. Heteropentamer composed of five different subunits. FAD is required as a cofactor.

It localises to the peroxisome. The enzyme catalyses a 2,3-saturated acyl-CoA + O2 = a (2E)-enoyl-CoA + H2O2. Its pathway is lipid metabolism; peroxisomal fatty acid beta-oxidation. Oxidizes aliphatic acyl-CoA substrates of different chain lengths such as hexanoyl-CoA, decanoyl-CoA and myristoyl-CoA as well as aromatic/heterocyclic ring-substituted chromogenic substrates, such as furylpropionyl-CoA. Of the above substrates, the efficiency of the enzyme, exhibits the following order: decanoyl-CoA &gt; myristoyl-CoA &gt; hexanoyl-CoA &gt; furyl-propionyl-CoA. This Yarrowia lipolytica (strain CLIB 122 / E 150) (Yeast) protein is Acyl-coenzyme A oxidase 3 (POX3).